Consider the following 246-residue polypeptide: 1-(5-phosphoribosyl)-5-[(5-phosphoribosylamino)methylideneamino] imidazole-4-carboxamide isomerase (246 aa).

Aspartate 8 (proton acceptor) is an active-site residue. Aspartate 131 (proton donor) is an active-site residue.

This sequence belongs to the HisA/HisF family.

The protein resides in the cytoplasm. It carries out the reaction 1-(5-phospho-beta-D-ribosyl)-5-[(5-phospho-beta-D-ribosylamino)methylideneamino]imidazole-4-carboxamide = 5-[(5-phospho-1-deoxy-D-ribulos-1-ylimino)methylamino]-1-(5-phospho-beta-D-ribosyl)imidazole-4-carboxamide. Its pathway is amino-acid biosynthesis; L-histidine biosynthesis; L-histidine from 5-phospho-alpha-D-ribose 1-diphosphate: step 4/9. The polypeptide is 1-(5-phosphoribosyl)-5-[(5-phosphoribosylamino)methylideneamino] imidazole-4-carboxamide isomerase (Delftia acidovorans (strain DSM 14801 / SPH-1)).